A 395-amino-acid polypeptide reads, in one-letter code: D-alanine--D-alanine ligase (395 aa).

In terms of domain architecture, ATP-grasp spans Lys172–Glu391. Residue Asp204–Glu266 coordinates ATP. 3 residues coordinate Mg(2+): Asp345, Glu358, and Asn360.

This sequence belongs to the D-alanine--D-alanine ligase family. It depends on Mg(2+) as a cofactor. Mn(2+) serves as cofactor.

The protein resides in the cytoplasm. It catalyses the reaction 2 D-alanine + ATP = D-alanyl-D-alanine + ADP + phosphate + H(+). It participates in cell wall biogenesis; peptidoglycan biosynthesis. Functionally, cell wall formation. The chain is D-alanine--D-alanine ligase from Bifidobacterium longum subsp. infantis (strain ATCC 15697 / DSM 20088 / JCM 1222 / NCTC 11817 / S12).